A 388-amino-acid chain; its full sequence is MENQFKNNNNSSSIETSNQFSNKKTNRLDSFVSVSELHEEAKRLLPKMAYDYYASGSNDQITLAENENAFSRIKLVPRSLVDVSKVNTKTRIFGRDISTPILIAPWAMQRMASQRGELDTVEASKEFNTIMTLSSLSTTSVEDLSSATNGNPGWFQLYVFKDRKVSEELVKRAESIGYSALVLTVDTPFLGKRTADFKNSFKLPNGLSLKIFEKLMLSNLDGGLNQYIATMIDPSLTWNDLKWLKSITKLPILVKGIMCPKDAELALQYGADGIIVSNHGGRQLDTCPSTIEVLPYISKVVRGRVPLILDGGIRRGTDVLKALAFGANAVCIGRPIIWGLSTGGKDGVLKVLNLLNSELQLAMALTGITNISDINNSIIWDQNKYIKL.

A disordered region spans residues 1–21 (MENQFKNNNNSSSIETSNQFS). The 359-residue stretch at 26–384 (NRLDSFVSVS…NNSIIWDQNK (359 aa)) folds into the FMN hydroxy acid dehydrogenase domain. Residue Tyr-52 participates in glyoxylate binding. Residues 105–107 (PWA), Ser-134, 156–158 (QLY), and Thr-184 each bind FMN. Tyr-158 is a binding site for glyoxylate. Residue Arg-193 participates in glyoxylate binding. FMN is bound by residues Lys-255 and Ser-277. Glyoxylate is bound by residues His-279 and Arg-282. The active-site Proton acceptor is His-279. FMN contacts are provided by residues 310–314 (DGGIR) and 333–334 (GR).

It belongs to the FMN-dependent alpha-hydroxy acid dehydrogenase family. In terms of assembly, homotetramer. The cofactor is FMN.

The enzyme catalyses glycolate + O2 = glyoxylate + H2O2. It carries out the reaction a (2S)-2-hydroxycarboxylate + O2 = a 2-oxocarboxylate + H2O2. Catalyzes the oxidation of glycolate to glyoxylate, with a reduction of O2 to H2O2. May use other 2-hydroxyacids as substrates. This is 2-Hydroxyacid oxidase (haox) from Dictyostelium discoideum (Social amoeba).